The chain runs to 87 residues: Large ribosomal subunit protein bL31B (87 aa).

It belongs to the bacterial ribosomal protein bL31 family. Type B subfamily. Part of the 50S ribosomal subunit.

This Corynebacterium kroppenstedtii (strain DSM 44385 / JCM 11950 / CIP 105744 / CCUG 35717) protein is Large ribosomal subunit protein bL31B.